Consider the following 206-residue polypeptide: MRLLPLLRTVLWAALLGSRLPGCSSLRHPIYWNSSNPRLLRGDAVVELGFNDYLDIFCPHYESPGPPEGPETFALYMVDWSGYEACTAEGANAFQRWNCSMPFAPFSPVRFSEKIQRYTPFPLGFEFLPGETYYYISVPTPESPGRCLRLQVSVCCKESGSSHESAHPVGSPGESGTSGWRGGHAPSPLCLLLLLLLPILRLLRVL.

Positions 1-25 are cleaved as a signal peptide; it reads MRLLPLLRTVLWAALLGSRLPGCSS. An Ephrin RBD domain is found at 26–158; sequence LRHPIYWNSS…RLQVSVCCKE (133 aa). Asn33 is a glycosylation site (N-linked (GlcNAc...) asparagine). Positions 41-43 match the Cell attachment site motif; that stretch reads RGD. 2 cysteine pairs are disulfide-bonded: Cys58/Cys99 and Cys86/Cys147. N-linked (GlcNAc...) asparagine glycosylation occurs at Asn98. Residues 161 to 180 form a disordered region; that stretch reads SSHESAHPVGSPGESGTSGW. Residue Ser175 is the site of GPI-anchor amidated serine attachment. Positions 176 to 206 are cleaved as a propeptide — removed in mature form; the sequence is GTSGWRGGHAPSPLCLLLLLLLPILRLLRVL.

The protein belongs to the ephrin family. Expressed in myogenic progenitor cells.

The protein resides in the cell membrane. In terms of biological role, cell surface GPI-bound ligand for Eph receptors, a family of receptor tyrosine kinases which are crucial for migration, repulsion and adhesion during neuronal, vascular and epithelial development. Binds promiscuously Eph receptors residing on adjacent cells, leading to contact-dependent bidirectional signaling into neighboring cells. May play a role in the interaction between activated B-lymphocytes and dendritic cells in tonsils. This is Ephrin-A4 (Efna4) from Mus musculus (Mouse).